We begin with the raw amino-acid sequence, 319 residues long: Exopolyphosphatase 2 (319 aa).

This sequence belongs to the GppA/Ppx family. In terms of assembly, homodimer.

The catalysed reaction is [phosphate](n) + H2O = [phosphate](n-1) + phosphate + H(+). Its activity is regulated as follows. Exopolyphosphatase activity is inhibited by ppGpp alarmones produced during the bacterial stringent response. Degradation of inorganic polyphosphates (polyP). Releases orthophosphate processively from the ends of the polyP chain. Prefers long-chain length polyphosphates as substrates. The polypeptide is Exopolyphosphatase 2 (Mycobacterium tuberculosis (strain CDC 1551 / Oshkosh)).